Consider the following 215-residue polypeptide: Large ribosomal subunit protein uL16 (215 aa).

It belongs to the universal ribosomal protein uL16 family. Component of the small ribosomal subunit. Mature ribosomes consist of a small (40S) and a large (60S) subunit. The 40S subunit contains about 33 different proteins and 1 molecule of RNA (18S). The 60S subunit contains about 49 different proteins and 3 molecules of RNA (25S, 5.8S and 5S).

The polypeptide is Large ribosomal subunit protein uL16 (RPL10) (Euglena gracilis).